We begin with the raw amino-acid sequence, 132 residues long: Putative nickel-responsive regulator (132 aa).

The Ni(2+) site is built by histidine 77, histidine 88, histidine 90, and cysteine 96.

The protein belongs to the transcriptional regulatory CopG/NikR family. Ni(2+) is required as a cofactor.

Transcriptional regulator. This is Putative nickel-responsive regulator from Brucella abortus (strain S19).